Reading from the N-terminus, the 588-residue chain is Lysine--tRNA ligase (588 aa).

The span at 1-10 shows a compositional bias: polar residues; it reads MDSSVSTEPL. The interval 1–54 is disordered; that stretch reads MDSSVSTEPLSKNALKREKKAKEKEQLEQEKKAAAVAKRQMEQHNLPENDDLDP. The span at 20–47 shows a compositional bias: basic and acidic residues; sequence KAKEKEQLEQEKKAAAVAKRQMEQHNLP.

It belongs to the class-II aminoacyl-tRNA synthetase family.

The protein localises to the cytoplasm. The catalysed reaction is tRNA(Lys) + L-lysine + ATP = L-lysyl-tRNA(Lys) + AMP + diphosphate. This chain is Lysine--tRNA ligase (LYSRS), found in Solanum lycopersicum (Tomato).